A 96-amino-acid polypeptide reads, in one-letter code: (4S)-4-hydroxy-5-phosphonooxypentane-2,3-dione isomerase (96 aa).

Residues 2-91 (HVTLVEINVH…MTGPRTKKVF (90 aa)) enclose the ABM domain.

The protein belongs to the LsrG family. As to quaternary structure, homodimer.

It localises to the cytoplasm. It catalyses the reaction (2S)-2-hydroxy-3,4-dioxopentyl phosphate = 3-hydroxy-2,4-dioxopentyl phosphate. Functionally, involved in the degradation of phospho-AI-2, thereby terminating induction of the lsr operon and closing the AI-2 signaling cycle. Catalyzes the conversion of (4S)-4-hydroxy-5-phosphonooxypentane-2,3-dione (P-DPD) to 3-hydroxy-5-phosphonooxypentane-2,4-dione (P-HPD). The protein is (4S)-4-hydroxy-5-phosphonooxypentane-2,3-dione isomerase of Salmonella typhimurium (strain LT2 / SGSC1412 / ATCC 700720).